The sequence spans 329 residues: Quinolinate synthase (329 aa).

The iminosuccinate site is built by His44 and Ser61. Cys106 provides a ligand contact to [4Fe-4S] cluster. Residues Tyr132–Asn134 and Ser149 each bind iminosuccinate. [4Fe-4S] cluster is bound at residue Cys192. Iminosuccinate contacts are provided by residues His218 to Glu220 and Thr235. [4Fe-4S] cluster is bound at residue Cys285.

This sequence belongs to the quinolinate synthase family. Type 2 subfamily. [4Fe-4S] cluster is required as a cofactor.

It is found in the plastid. It localises to the cyanelle. The enzyme catalyses iminosuccinate + dihydroxyacetone phosphate = quinolinate + phosphate + 2 H2O + H(+). It participates in cofactor biosynthesis; NAD(+) biosynthesis; quinolinate from iminoaspartate: step 1/1. Catalyzes the condensation of iminoaspartate with dihydroxyacetone phosphate to form quinolinate. This chain is Quinolinate synthase, found in Cyanophora paradoxa.